The chain runs to 396 residues: RNA polymerase principal sigma factor HrdA (396 aa).

The segment covering 1–20 (MRGGQRRASRLRPPTYRRRP) has biased composition (basic residues). The tract at residues 1-96 (MRGGQRRASR…PTRTESGGPS (96 aa)) is disordered. 2 stretches are compositionally biased toward low complexity: residues 33-42 (QTQTLTQTDT) and 56-75 (LLAMPAQPGAGAALPHPGAP). The Polymerase core binding motif lies at 187 to 200 (DLVQEGNLGLIRAV). Positions 357–376 (LEEIGRLFGVTRERIRQIES) form a DNA-binding region, H-T-H motif.

Belongs to the sigma-70 factor family. In terms of assembly, interacts transiently with the RNA polymerase catalytic core. Interacts with RNA polymerase-binding protein RbpA.

Sigma factors are initiation factors that promote the attachment of RNA polymerase to specific initiation sites and are then released. The protein is RNA polymerase principal sigma factor HrdA (hrdA) of Streptomyces coelicolor (strain ATCC BAA-471 / A3(2) / M145).